Reading from the N-terminus, the 2571-residue chain is Stabilin-1 (2571 aa).

An N-terminal signal peptide occupies residues 1–25 (MAEPRTLLLLCVLVLCLSDSSFIRG). Topologically, residues 26–2475 (QTVRSKRCDI…RAVLGSEPPP (2450 aa)) are extracellular. 4 consecutive EGF-like domains span residues 111–149 (FECP…SVCQ), 157–194 (FGPD…PHCD), 196–232 (ELPV…NVCL), and 233–272 (APDP…KVCL). 12 disulfide bridges follow: Cys113/Cys127, Cys121/Cys137, Cys139/Cys148, Cys161/Cys172, Cys165/Cys182, Cys184/Cys193, Cys200/Cys211, Cys205/Cys218, Cys220/Cys231, Cys237/Cys248, Cys242/Cys258, and Cys260/Cys271. 2 N-linked (GlcNAc...) asparagine glycosylation sites follow: Asn134 and Asn142. 7 N-linked (GlcNAc...) asparagine glycosylation sites follow: Asn287, Asn313, Asn416, Asn607, Asn674, Asn713, and Asn746. 2 FAS1 domains span residues 357–495 (YGHL…TALR) and 507–642 (KKTV…EGIL). Residues 729–769 (DCTQCPGGFSNPCYGKGNCSDGVRGNGACLCFPDYKGIACH) enclose the EGF-like 5 domain. 3 disulfides stabilise this stretch: Cys733/Cys747, Cys741/Cys757, and Cys759/Cys768. Asn817 carries N-linked (GlcNAc...) asparagine glycosylation. EGF-like domains are found at residues 819–859 (SMGN…NGFS), 862–904 (RSNP…RICV), 905–947 (AIDE…YECS), and 948–987 (PIDP…DGFS). Intrachain disulfides connect Cys823/Cys838, Cys832/Cys847, Cys866/Cys880, Cys874/Cys890, Cys892/Cys903, Cys909/Cys923, Cys917/Cys933, Cys935/Cys946, Cys952/Cys965, and Cys959/Cys975. FAS1 domains lie at 989–1119 (YGDI…SQVL) and 1129–1254 (GPGL…SGIL). N-linked (GlcNAc...) asparagine glycosylation is found at Asn1011, Asn1088, Asn1097, Asn1171, Asn1179, Asn1223, and Asn1275. The 66-residue stretch at 1328–1393 (TLCEPCPGGL…CDCDHGLCQE (66 aa)) folds into the Laminin EGF-like 1 domain. 18 disulfide bridges follow: Cys1333/Cys1347, Cys1341/Cys1357, Cys1359/Cys1368, Cys1380/Cys1391, Cys1384/Cys1401, Cys1403/Cys1412, Cys1421/Cys1431, Cys1425/Cys1441, Cys1443/Cys1454, Cys1460/Cys1473, Cys1467/Cys1483, Cys1485/Cys1496, Cys1502/Cys1515, Cys1509/Cys1525, Cys1527/Cys1539, Cys1545/Cys1558, Cys1552/Cys1568, and Cys1570/Cys1582. The N-linked (GlcNAc...) asparagine glycan is linked to Asn1398. EGF-like domains lie at 1417–1455 (TDHQ…SYCS), 1456–1497 (EVDP…ELCQ), 1498–1540 (EINS…QTCK), and 1541–1583 (LLDP…ITCH). 2 N-linked (GlcNAc...) asparagine glycosylation sites follow: Asn1450 and Asn1472. FAS1 domains lie at 1583-1709 (HGRV…DHVL) and 1725-1865 (PQRN…DQLL). Residues Asn1627 and Asn1728 are each glycosylated (N-linked (GlcNAc...) asparagine). One can recognise a Laminin EGF-like 2 domain in the interval 1966-2031 (INCHACPGGP…RCTQHGRCDE (66 aa)). Cystine bridges form between Cys1971–Cys1985, Cys1979–Cys1995, Cys1997–Cys2006, Cys2018–Cys2029, Cys2023–Cys2039, Cys2041–Cys2050, Cys2060–Cys2070, Cys2064–Cys2076, Cys2078–Cys2089, Cys2095–Cys2108, Cys2102–Cys2117, Cys2119–Cys2130, Cys2136–Cys2150, Cys2144–Cys2160, Cys2162–Cys2173, Cys2230–Cys2299, and Cys2254–Cys2275. EGF-like domains follow at residues 2056-2090 (LQPV…RVCT), 2091-2131 (VADL…WSCR), and 2132-2174 (ARDP…LQCL). An N-linked (GlcNAc...) asparagine glycan is attached at Asn2107. The region spanning 2208–2301 (GVFHIQATSG…SELWDAYCYR (94 aa)) is the Link domain. Asn2261, Asn2290, Asn2334, Asn2347, Asn2379, Asn2393, Asn2400, and Asn2424 each carry an N-linked (GlcNAc...) asparagine glycan. An FAS1 7 domain is found at 2322–2459 (NGKLLDVLAA…GIIHALASPL (138 aa)). A helical membrane pass occupies residues 2476 to 2496 (VALSLGVVVTSGTLLGLVAGA). Residues 2497 to 2571 (LYLRARGKPP…PDTQRVLKVK (75 aa)) are Cytoplasmic-facing.

Interacts with CHID1.

The protein localises to the membrane. Its function is as follows. Acts as a scavenger receptor for acetylated low density lipoprotein. Binds to both Gram-positive and Gram-negative bacteria and may play a role in defense against bacterial infection. When inhibited in endothelial tube formation assays, there is a marked decrease in cell-cell interactions, suggesting a role in angiogenesis. Involved in the delivery of newly synthesized CHID1/SI-CLP from the biosynthetic compartment to the endosomal/lysosomal system. The protein is Stabilin-1 (Stab1) of Mus musculus (Mouse).